We begin with the raw amino-acid sequence, 186 residues long: Quinone reductase (186 aa).

FMN is bound by residues 13–20, 80–83, and serine 116; these read SLRKESYN and EYNR.

Belongs to the SsuE family. Homotetramer. Dimer of dimers. The tetrameric configuration has a central role in chromate reductase activity. It depends on FMN as a cofactor.

It carries out the reaction a quinone + NADH + H(+) = a quinol + NAD(+). The enzyme catalyses a quinone + NADPH + H(+) = a quinol + NADP(+). It catalyses the reaction Cr(6+) + 2 NADH + O2 = Cr(3+) + superoxide + 2 NAD(+) + 2 H(+). The catalysed reaction is Cr(6+) + 2 NADPH + O2 = Cr(3+) + superoxide + 2 NADP(+) + 2 H(+). Its activity is regulated as follows. May be inhibited by divalent cations. Its function is as follows. Catalyzes the reduction of quinones. Acts by simultaneous two-electron transfer, avoiding formation of highly reactive semiquinone intermediates and producing quinols that promote tolerance of H(2)O(2). Quinone reduction is probably the primary biological role of ChrR. Can also reduce toxic chromate to insoluble and less toxic Cr(3+). Catalyzes the transfer of three electrons to Cr(6+) producing Cr(3+) and one electron to molecular oxygen. This reaction produces transiently a minimal amount of the toxic Cr(5+) species and reactive oxygen species (ROS). Chromate reduction protects the cell against chromate toxicity, but is likely a secondary activity. Can also reduce potassium ferricyanide and 2,6-dichloroindophenol. During chromate reduction, displays an eightfold preference for NADH over NADPH. The sequence is that of Quinone reductase from Pseudomonas putida (strain ATCC 47054 / DSM 6125 / CFBP 8728 / NCIMB 11950 / KT2440).